The sequence spans 169 residues: Myosin regulatory light chain 11 (169 aa).

A N,N,N-trimethylalanine modification is found at alanine 2. 2 positions are modified to phosphoserine: serine 15 and serine 16. A phosphothreonine mark is found at threonine 25 and threonine 35. One can recognise an EF-hand 1 domain in the interval 25-60 (TQIQEFKEAFTVIDQNRDGIIDKEDLRDTFAAMGRL). Ca(2+) contacts are provided by aspartate 38, asparagine 40, aspartate 42, and aspartate 49. The residue at position 75 (serine 75) is a Phosphoserine. 2 EF-hand domains span residues 95–130 (DPEDVITGAFKVLDPEGKGTIKKKFLEELLTTQCDR) and 131–166 (FSQEEIKNMWAAFPPDVGGNVDYKNICYVITHGDAK). Phosphothreonine is present on threonine 101.

As to quaternary structure, myosin is a hexamer of 2 heavy chains and 4 light chains. Expressed in fetal and adult skeletal muscle.

Functionally, myosin regulatory subunit that plays an essential role to maintain muscle integrity during early development. Plays a role in muscle contraction. The sequence is that of Myosin regulatory light chain 11 from Homo sapiens (Human).